We begin with the raw amino-acid sequence, 309 residues long: Homoserine O-succinyltransferase (309 aa).

Catalysis depends on Cys-142, which acts as the Acyl-thioester intermediate. Residues Lys-163 and Ser-192 each contribute to the substrate site. His-235 functions as the Proton acceptor in the catalytic mechanism. Glu-237 is an active-site residue. Arg-249 is a substrate binding site.

The protein belongs to the MetA family. As to quaternary structure, homodimer.

The protein resides in the cytoplasm. The enzyme catalyses L-homoserine + succinyl-CoA = O-succinyl-L-homoserine + CoA. It participates in amino-acid biosynthesis; L-methionine biosynthesis via de novo pathway; O-succinyl-L-homoserine from L-homoserine: step 1/1. Functionally, transfers a succinyl group from succinyl-CoA to L-homoserine, forming succinyl-L-homoserine. The chain is Homoserine O-succinyltransferase from Escherichia coli O17:K52:H18 (strain UMN026 / ExPEC).